We begin with the raw amino-acid sequence, 405 residues long: uncharacterized protein (405 aa).

13 consecutive transmembrane segments (helical) span residues 19 to 39 (IVSI…PLAV), 48 to 68 (MGFS…ATLL), 85 to 105 (IVVF…LADI), 106 to 126 (ASAW…ILGI), 129 to 149 (SFAG…LHIG), 156 to 176 (GIVT…CYAW), 178 to 198 (GLQG…LLAL), 224 to 244 (GMAL…ITLF), 252 to 272 (GAAF…LLFP), 283 to 303 (VAMI…TAAM), 309 to 329 (IGVL…GVVA), 344 to 364 (TYTV…GLVM), and 366 to 386 (WAGV…ALLL).

This sequence belongs to the major facilitator superfamily. YhhS family.

The protein resides in the cell inner membrane. This is an uncharacterized protein from Salmonella enteritidis PT4 (strain P125109).